The following is a 306-amino-acid chain: Glutaminase (306 aa).

Serine 64, asparagine 115, glutamate 159, asparagine 166, tyrosine 190, tyrosine 242, and valine 260 together coordinate substrate.

The protein belongs to the glutaminase family. As to quaternary structure, homotetramer.

It catalyses the reaction L-glutamine + H2O = L-glutamate + NH4(+). This chain is Glutaminase, found in Aliivibrio fischeri (strain ATCC 700601 / ES114) (Vibrio fischeri).